The primary structure comprises 488 residues: Glutamyl-tRNA(Gln) amidotransferase subunit A (488 aa).

Residues Lys-77 and Ser-152 each act as charge relay system in the active site. Catalysis depends on Ser-176, which acts as the Acyl-ester intermediate.

Belongs to the amidase family. GatA subfamily. As to quaternary structure, heterotrimer of A, B and C subunits.

The enzyme catalyses L-glutamyl-tRNA(Gln) + L-glutamine + ATP + H2O = L-glutaminyl-tRNA(Gln) + L-glutamate + ADP + phosphate + H(+). Allows the formation of correctly charged Gln-tRNA(Gln) through the transamidation of misacylated Glu-tRNA(Gln) in organisms which lack glutaminyl-tRNA synthetase. The reaction takes place in the presence of glutamine and ATP through an activated gamma-phospho-Glu-tRNA(Gln). The protein is Glutamyl-tRNA(Gln) amidotransferase subunit A of Streptococcus agalactiae serotype Ia (strain ATCC 27591 / A909 / CDC SS700).